The sequence spans 428 residues: Serine--tRNA ligase (428 aa).

231-233 (TSE) contacts L-serine. ATP contacts are provided by residues 262 to 264 (RRE) and V278. Residue E285 coordinates L-serine. 349 to 352 (ELTS) is an ATP binding site. T384 is an L-serine binding site.

It belongs to the class-II aminoacyl-tRNA synthetase family. Type-1 seryl-tRNA synthetase subfamily. As to quaternary structure, homodimer. The tRNA molecule binds across the dimer.

It is found in the cytoplasm. The catalysed reaction is tRNA(Ser) + L-serine + ATP = L-seryl-tRNA(Ser) + AMP + diphosphate + H(+). It catalyses the reaction tRNA(Sec) + L-serine + ATP = L-seryl-tRNA(Sec) + AMP + diphosphate + H(+). The protein operates within aminoacyl-tRNA biosynthesis; selenocysteinyl-tRNA(Sec) biosynthesis; L-seryl-tRNA(Sec) from L-serine and tRNA(Sec): step 1/1. Catalyzes the attachment of serine to tRNA(Ser). Is also able to aminoacylate tRNA(Sec) with serine, to form the misacylated tRNA L-seryl-tRNA(Sec), which will be further converted into selenocysteinyl-tRNA(Sec). This is Serine--tRNA ligase from Bifidobacterium longum (strain DJO10A).